Reading from the N-terminus, the 306-residue chain is Arginase (306 aa).

Mn(2+) is bound by residues H96, D123, H125, and D127. Residues 125–129 (HTDFH), 136–138 (SGN), and D178 each bind substrate. D226 and D228 together coordinate Mn(2+). T240 and E271 together coordinate substrate.

This sequence belongs to the arginase family. The cofactor is Mn(2+).

It catalyses the reaction L-arginine + H2O = urea + L-ornithine. It functions in the pathway nitrogen metabolism; urea cycle; L-ornithine and urea from L-arginine: step 1/1. This is Arginase (arcB) from Brucella abortus biovar 1 (strain 9-941).